The following is a 332-amino-acid chain: Serpentine receptor class alpha-10 (332 aa).

At 1-26 the chain is on the extracellular side; that stretch reads MTSSNISICATEDQMVLQTSLLLRVN. A helical membrane pass occupies residues 27-47; the sequence is VILMTTVAIFTFVLTYRALFI. Residues 48 to 64 are Cytoplasmic-facing; the sequence is LKQRPIFHKSTKILLYT. The helical transmembrane segment at 65 to 85 threads the bilayer; that stretch reads SLIFVNIHEIIFMVIQCVAFI. Residues 86–109 lie on the Extracellular side of the membrane; it reads RSFTLSDKPCEIMRTTLECRFKNH. Residues 110–132 form a helical membrane-spanning segment; it reads VLIFGIAGMNFNQFGLTVDRLLA. The Cytoplasmic segment spans residues 133-146; that stretch reads TVIPQTYSHLGSFP. The chain crosses the membrane as a helical span at residues 147–167; the sequence is GILISILVIGCSIAAPLIIAI. Over 168 to 191 the chain is Extracellular; that stretch reads GDPYDDIVPNCFFFPQHSAPRANV. Residues 192–212 traverse the membrane as a helical segment; that stretch reads FLIILSALVIASIFLNLIIIF. Topologically, residues 213-239 are cytoplasmic; sequence ANKKLEKGTRYYVSQRYQKREALISTR. Residues 240–260 traverse the membrane as a helical segment; sequence IIVYIAASQFLGMVLYSTIVL. At 261–276 the chain is on the extracellular side; sequence TLRLHKSMIPVSMYHN. The helical transmembrane segment at 277-297 threads the bilayer; sequence IVWWAYTVPFAAVALPALLIH. Residues 298-332 lie on the Cytoplasmic side of the membrane; that stretch reads RINLVGSNRKRVINRITAKVETQEEHMKSLKELWG.

The protein belongs to the nematode receptor-like protein sra family.

The protein localises to the membrane. This is Serpentine receptor class alpha-10 from Caenorhabditis briggsae.